A 675-amino-acid chain; its full sequence is Probable metal-nicotianamine transporter YSL16 (675 aa).

Residues 1–11 (MDRHALGGGGA) show a composition bias toward gly residues. Residues 1–20 (MDRHALGGGGALEIEKTPEA) form a disordered region. The next 14 helical transmembrane spans lie at 50 to 70 (GMVA…KLSL), 73 to 93 (GLIP…LRGW), 118 to 138 (CAVA…LLGL), 162 to 182 (GIGW…LTLL), 231 to 251 (ISFL…CGFL), 283 to 303 (LVNL…WPLI), 329 to 349 (FICI…VIVV), 393 to 413 (MAYT…PVMF), 421 to 441 (VIIA…GTGL), 453 to 473 (IALF…AGLV), 507 to 527 (VGQV…FFLF), 567 to 587 (LQLC…RDFL), 605 to 625 (FLVG…VFLW), and 633 to 653 (AALL…IWTF).

It belongs to the YSL (TC 2.A.67.2) family. Expressed in roots.

The protein resides in the membrane. May be involved in the transport of nicotianamine-chelated metals. The chain is Probable metal-nicotianamine transporter YSL16 (YSL16) from Oryza sativa subsp. japonica (Rice).